The primary structure comprises 109 residues: Sulredoxin (109 aa).

The Rieske domain maps to 3 to 107; sequence WKRTISAKAL…IRDNNGWIEV (105 aa). [2Fe-2S] cluster-binding residues include C43, H45, C62, and H65.

As to quaternary structure, homooligomeric. It depends on [2Fe-2S] cluster as a cofactor.

Its subcellular location is the cytoplasm. In terms of biological role, not yet known. The chain is Sulredoxin (sdx) from Sulfurisphaera tokodaii (strain DSM 16993 / JCM 10545 / NBRC 100140 / 7) (Sulfolobus tokodaii).